A 273-amino-acid polypeptide reads, in one-letter code: Protein BRANCHLESS TRICHOME (273 aa).

A compositionally biased stretch (polar residues) spans 1 to 12; that stretch reads MKDMKMQSSPET. The segment at 1–30 is disordered; that stretch reads MKDMKMQSSPETMMTRIPTPDPHSTGVRED. Residues 69–199 adopt a coiled-coil conformation; that stretch reads IKVFMESELG…GERERNRMMK (131 aa).

Interacts with STI.

Acts as a key regulator of trichome branching. Could participate with STI in the same pathway. Also plays a role in integrating endoreplication levels with cell shape. This is Protein BRANCHLESS TRICHOME (BLT) from Arabidopsis thaliana (Mouse-ear cress).